Here is a 176-residue protein sequence, read N- to C-terminus: BPTI/Kunitz inhibitor domain-containing protein C02F12.5 (176 aa).

The signal sequence occupies residues 1-17 (MLFFTLLIQLFLVPVLC). Positions 21 to 74 (CSSELKFGTACSENKTSTKWYYDSKLLFCYPYKYLGCGEGSNSFESNENCLESC) constitute a BPTI/Kunitz inhibitor domain. 3 disulfides stabilise this stretch: Cys-21-Cys-74, Cys-31-Cys-57, and Cys-49-Cys-70. N-linked (GlcNAc...) asparagine glycosylation occurs at Asn-34.

The chain is BPTI/Kunitz inhibitor domain-containing protein C02F12.5 from Caenorhabditis elegans.